A 199-amino-acid polypeptide reads, in one-letter code: Protein shisa-like-1 (199 aa).

A signal peptide spans 1–25; the sequence is MTSCGQQSLNVLAVLFSLLFSAVLS. At 26–97 the chain is on the extracellular side; the sequence is AHFRVCEPYT…SEGYMHNNYT (72 aa). N-linked (GlcNAc...) asparagine glycans are attached at residues asparagine 53 and asparagine 95. Residues 98 to 118 form a helical membrane-spanning segment; that stretch reads ALLGVWIYGFFVLMLLVLDLL. At 119–199 the chain is on the cytoplasmic side; the sequence is YYSAMNYDIC…PLMTFQSSSA (81 aa). Residues 146 to 199 are disordered; that stretch reads PRRWGNPARAPRPGQRAPQPQPPPGPLPQAPQAVHTLRGDAHSPPLMTFQSSSA. Low complexity predominate over residues 152-163; sequence PARAPRPGQRAP. The segment covering 164–174 has biased composition (pro residues); it reads QPQPPPGPLPQ.

The protein belongs to the shisa family.

It is found in the membrane. The polypeptide is Protein shisa-like-1 (Homo sapiens (Human)).